The sequence spans 1128 residues: Major DNA-binding protein (1128 aa).

Residues 1104–1128 (LGGGGQGSGGRRKRRLATVLPGLEV) form a required for nuclear localization region.

It belongs to the herpesviridae major DNA-binding protein family. In terms of assembly, homooligomers. Forms double-helical filaments necessary for the formation of replication compartments within the host nucleus. Interacts with the origin-binding protein. Interacts with the helicase primase complex; this interaction stimulates primer synthesis activity of the helicase-primase complex. Interacts with the DNA polymerase. Interacts with the alkaline exonuclease; this interaction increases its nuclease processivity.

It localises to the virion tegument. The protein localises to the host nucleus. Functionally, plays several crucial roles in viral infection. Participates in the opening of the viral DNA origin to initiate replication by interacting with the origin-binding protein. May disrupt loops, hairpins and other secondary structures present on ssDNA to reduce and eliminate pausing of viral DNA polymerase at specific sites during elongation. Promotes viral DNA recombination by performing strand-transfer, characterized by the ability to transfer a DNA strand from a linear duplex to a complementary single-stranded DNA circle. Can also catalyze the renaturation of complementary single strands. Additionally, reorganizes the host cell nucleus, leading to the formation of prereplicative sites and replication compartments. This process is driven by the protein which can form double-helical filaments in the absence of DNA. The sequence is that of Major DNA-binding protein from Homo sapiens (Human).